Reading from the N-terminus, the 342-residue chain is S-adenosylmethionine:tRNA ribosyltransferase-isomerase (342 aa).

The protein belongs to the QueA family. As to quaternary structure, monomer.

It localises to the cytoplasm. The enzyme catalyses 7-aminomethyl-7-carbaguanosine(34) in tRNA + S-adenosyl-L-methionine = epoxyqueuosine(34) in tRNA + adenine + L-methionine + 2 H(+). It functions in the pathway tRNA modification; tRNA-queuosine biosynthesis. Its function is as follows. Transfers and isomerizes the ribose moiety from AdoMet to the 7-aminomethyl group of 7-deazaguanine (preQ1-tRNA) to give epoxyqueuosine (oQ-tRNA). The sequence is that of S-adenosylmethionine:tRNA ribosyltransferase-isomerase from Streptococcus pneumoniae (strain Hungary19A-6).